The sequence spans 243 residues: Bidirectional sugar transporter SWEET2a (243 aa).

Residues 1–23 (MDWAAPALTSFVADSSYRHLCCY) lie on the Extracellular side of the membrane. A helical transmembrane segment spans residues 24–44 (GAGIAGNVFAFVLFISPLPTF). In terms of domain architecture, MtN3/slv 1 spans 24 to 111 (GAGIAGNVFA…AVFIAFADAK (88 aa)). Over 45–57 (KRIVRNGSTEQFS) the chain is Cytoplasmic. Residues 58 to 80 (AMPYIYSLLNCLICMWYGLPFVS) form a helical membrane-spanning segment. Residues 81-89 (YGVVLVATV) are Extracellular-facing. Residues 90–110 (NSIGAVFQLAYTAVFIAFADA) traverse the membrane as a helical segment. Residues 111-117 (KQRLKVS) are Cytoplasmic-facing. The helical transmembrane segment at 118 to 138 (ALLAAVFVVFGLIVFVSLALL) threads the bilayer. The Extracellular segment spans residues 139-145 (DHPTRQM). The helical transmembrane segment at 146-166 (FVGYLSVASLIFMFASPLSII) threads the bilayer. The region spanning 147–230 (VGYLSVASLI…VLYAYFRKGS (84 aa)) is the MtN3/slv 2 domain. Over 167-179 (NLVIRTKSVEYMP) the chain is Cytoplasmic. The chain crosses the membrane as a helical span at residues 180-200 (FYLSLSMFLMSASFFGYGVLL). At 201-202 (ND) the chain is on the extracellular side. Residues 203 to 223 (FFIYIPNGIGTILGIIQLVLY) traverse the membrane as a helical segment. The Cytoplasmic segment spans residues 224–243 (AYFRKGSSEEAKLPLLVTHT).

Belongs to the SWEET sugar transporter family. Forms homooligomers and/or heterooligomers.

It is found in the cell membrane. Mediates both low-affinity uptake and efflux of sugar across the plasma membrane. The protein is Bidirectional sugar transporter SWEET2a of Sorghum bicolor (Sorghum).